The primary structure comprises 277 residues: Ribosomal RNA small subunit methyltransferase A (277 aa).

The S-adenosyl-L-methionine site is built by N27, L29, G54, E75, D95, and N118.

Belongs to the class I-like SAM-binding methyltransferase superfamily. rRNA adenine N(6)-methyltransferase family. RsmA subfamily.

It localises to the cytoplasm. The catalysed reaction is adenosine(1518)/adenosine(1519) in 16S rRNA + 4 S-adenosyl-L-methionine = N(6)-dimethyladenosine(1518)/N(6)-dimethyladenosine(1519) in 16S rRNA + 4 S-adenosyl-L-homocysteine + 4 H(+). Its function is as follows. Specifically dimethylates two adjacent adenosines (A1518 and A1519) in the loop of a conserved hairpin near the 3'-end of 16S rRNA in the 30S particle. May play a critical role in biogenesis of 30S subunits. This is Ribosomal RNA small subunit methyltransferase A from Chlamydia trachomatis serovar L2 (strain ATCC VR-902B / DSM 19102 / 434/Bu).